The following is a 142-amino-acid chain: Large ribosomal subunit protein uL13 (142 aa).

This sequence belongs to the universal ribosomal protein uL13 family. Part of the 50S ribosomal subunit.

Functionally, this protein is one of the early assembly proteins of the 50S ribosomal subunit, although it is not seen to bind rRNA by itself. It is important during the early stages of 50S assembly. The sequence is that of Large ribosomal subunit protein uL13 from Pseudomonas putida (strain ATCC 700007 / DSM 6899 / JCM 31910 / BCRC 17059 / LMG 24140 / F1).